Consider the following 245-residue polypeptide: 1-(5-phosphoribosyl)-5-[(5-phosphoribosylamino)methylideneamino] imidazole-4-carboxamide isomerase (245 aa).

D7 (proton acceptor) is an active-site residue. D129 serves as the catalytic Proton donor.

This sequence belongs to the HisA/HisF family.

The protein localises to the cytoplasm. It catalyses the reaction 1-(5-phospho-beta-D-ribosyl)-5-[(5-phospho-beta-D-ribosylamino)methylideneamino]imidazole-4-carboxamide = 5-[(5-phospho-1-deoxy-D-ribulos-1-ylimino)methylamino]-1-(5-phospho-beta-D-ribosyl)imidazole-4-carboxamide. It functions in the pathway amino-acid biosynthesis; L-histidine biosynthesis; L-histidine from 5-phospho-alpha-D-ribose 1-diphosphate: step 4/9. This Salmonella enteritidis PT4 (strain P125109) protein is 1-(5-phosphoribosyl)-5-[(5-phosphoribosylamino)methylideneamino] imidazole-4-carboxamide isomerase.